A 299-amino-acid polypeptide reads, in one-letter code: NEDD8-activating enzyme E1 catalytic subunit (299 aa).

Residue 12–37 coordinates ATP; it reads GLGCEILKNLTMLSFVKQVHIVDIDT. Cys168 acts as the Glycyl thioester intermediate in catalysis.

It belongs to the ubiquitin-activating E1 family. UBA3 subfamily. As to quaternary structure, heterodimer of UBA3 and ULA1. Interacts with NEDD8 and UBC12.

The catalysed reaction is ATP + [NEDD8 protein] + [E1 NEDD8-activating enzyme]-L-cysteine = AMP + diphosphate + [E1 NEDD8-activating enzyme]-S-[NEDD8 protein]-yl-L-cysteine.. The protein operates within protein modification; protein neddylation. Its function is as follows. Catalytic subunit of the dimeric UBA3-ULA1 E1 enzyme. E1 activates NEDD8/RUB1 by first adenylating its C-terminal glycine residue with ATP, thereafter linking this residue to the side chain of the catalytic cysteine, yielding a NEDD8-UBA3 thioester and free AMP. E1 finally transfers NEDD8 to the catalytic cysteine of UBC12. The polypeptide is NEDD8-activating enzyme E1 catalytic subunit (UBA3) (Saccharomyces cerevisiae (strain ATCC 204508 / S288c) (Baker's yeast)).